The primary structure comprises 93 residues: Large ribosomal subunit protein uL23cz/uL23cy (93 aa).

The protein belongs to the universal ribosomal protein uL23 family. Part of the 50S ribosomal subunit.

The protein localises to the plastid. Its subcellular location is the chloroplast. Its function is as follows. Binds to 23S rRNA. In Platanus occidentalis (Sycamore), this protein is Large ribosomal subunit protein uL23cz/uL23cy (rpl23-A).